We begin with the raw amino-acid sequence, 158 residues long: Na(+)/H(+) antiporter subunit E (158 aa).

The next 2 membrane-spanning stretches (helical) occupy residues 22 to 41 (YTAVDFLIGYVVGIFILFVL) and 54 to 76 (IWAIIKLISLFFKELILANIDVI).

Belongs to the CPA3 antiporters (TC 2.A.63) subunit E family. Forms a heterooligomeric complex that consists of seven subunits: MrpA, MrpB, MrpC, MrpD, MrpE, MrpF and MrpG.

Its subcellular location is the cell membrane. Mnh complex is a Na(+)Li(+)/H(+) antiporter involved in Na(+) and/or Li(+) excretion and Na(+) resistance. Na(+)/H(+) antiport consumes a transmembrane electrical potential, and is thus inferred to be electrogenic. Does not transport K(+), Ca(2+) or Mg(2+). Functionally, mrp complex is a Na(+)/H(+) antiporter involved in Na(+) excretion and Na(+) resistance. The protein is Na(+)/H(+) antiporter subunit E (mrpE) of Alkalihalophilus pseudofirmus (strain ATCC BAA-2126 / JCM 17055 / OF4) (Bacillus pseudofirmus).